A 223-amino-acid polypeptide reads, in one-letter code: Deoxyribose-phosphate aldolase (223 aa).

The Proton donor/acceptor role is filled by aspartate 89. Lysine 152 serves as the catalytic Schiff-base intermediate with acetaldehyde. The Proton donor/acceptor role is filled by lysine 181.

It belongs to the DeoC/FbaB aldolase family. DeoC type 1 subfamily.

Its subcellular location is the cytoplasm. It catalyses the reaction 2-deoxy-D-ribose 5-phosphate = D-glyceraldehyde 3-phosphate + acetaldehyde. It participates in carbohydrate degradation; 2-deoxy-D-ribose 1-phosphate degradation; D-glyceraldehyde 3-phosphate and acetaldehyde from 2-deoxy-alpha-D-ribose 1-phosphate: step 2/2. Its function is as follows. Catalyzes a reversible aldol reaction between acetaldehyde and D-glyceraldehyde 3-phosphate to generate 2-deoxy-D-ribose 5-phosphate. The protein is Deoxyribose-phosphate aldolase of Bacillus cereus (strain ATCC 14579 / DSM 31 / CCUG 7414 / JCM 2152 / NBRC 15305 / NCIMB 9373 / NCTC 2599 / NRRL B-3711).